A 1129-amino-acid polypeptide reads, in one-letter code: Regulator of nonsense transcripts 1 (1129 aa).

A sufficient for interaction with RENT2 region spans residues 1–415; it reads MSVEAYGPSS…LRSSVGAPVE (415 aa). Residues S10 and S31 each carry the phosphoserine modification. The disordered stretch occupies residues 39–70; sequence TLPSQTQTPPGGPGGPGGGGAGGPGGAGAGAA. Over residues 52–69 the composition is skewed to gly residues; sequence GGPGGGGAGGPGGAGAGA. The region spanning 115–272 is the Upf1 CH-rich domain; sequence TKDLPIHACS…NKLEELWKEN (158 aa). Positions 123, 126, 137, 140, 145, 155, 159, 165, 183, 186, 209, and 213 each coordinate Zn(2+). The C3H stretch occupies residues 123 to 155; that stretch reads CSYCGIHDPACVVYCNTSKKWFCNGRGNTSGSH. The interval 137-165 is CC/SHH/C; that stretch reads CNTSKKWFCNGRGNTSGSHIVNHLVRAKC. The tract at residues 183 to 213 is C4; sequence CYNCGCRNVFLLGFIPAKADSVVVLLCRQPC. Residues Q486 and 506-510 each bind ATP; that span reads GTGKT. S565 carries the post-translational modification Phosphoserine. Positions 676, 713, and 844 each coordinate ATP. At S956 the chain carries Phosphoserine. Disordered regions lie at residues 1009–1058 and 1073–1096; these read FGQA…VASQ and SQPSQMSQPGLSQPELSQDSYLGD. R1019 carries the post-translational modification Omega-N-methylarginine. Over residues 1025–1034 the composition is skewed to basic residues; it reads KTGRGGRQKN. A compositionally biased stretch (polar residues) spans 1041–1058; that stretch reads PSQTNLPNSQASQDVASQ. Positions 1073 to 1086 are enriched in low complexity; that stretch reads SQPSQMSQPGLSQP. 4 positions are modified to phosphoserine: S1089, S1107, S1110, and S1127. 2 consecutive short sequence motifs ([ST]-Q motif) follow at residues 1089–1090 and 1107–1108; these read SQ. Positions 1110–1129 are disordered; sequence STYQGERAYQHGGVTGLSQY.

Belongs to the DNA2/NAM7 helicase family. As to quaternary structure, found in a post-splicing messenger ribonucleoprotein (mRNP) complex. Associates with the exon junction complex (EJC). Associates with the SGM1C complex; is phosphorylated by the complex kinase component SGM1. Part of a complex composed of SMG1, DHX34 and UPF1; within the complex DHX34 acts as a scaffolding protein to facilitate SMG1 phosphorylation of UPF1. Interacts with UPF2. Interacts with UPF3A and UPF3B. Interacts with EST1A. Interacts with SLBP. Interacts (when hyperphosphorylated) with PNRC2. Interacts with AGO1 and AGO2. Interacts with GSPT2. Interacts with isoform 1 and isoform 5 of ADAR/ADAR1. Interacts with SMG7. Interacts with ZC3H12A; this interaction occurs in a mRNA translationally active- and termination-dependent manner and is essential for ZC3H12A-mediated degradation of target mRNAs. Interacts with CPSF6. Interacts with MOV10; the interaction is direct and RNA-dependent. Interacts with SHFL; the interaction increases in the presence of RNA. Interacts with UPF2 and DDX4; interactions are mediated by TDRD6. Interacts with DHX34 and PABPC1/PABP1; the interactions are RNA-independent. Interacts with RBM46. (Microbial infection) Interacts with human T-cell leukemia virus 1/HTLV-1 protein Tax; this interaction inhibits the host nonsense-mediated mRNA decay (NMD). Phosphorylated by SMG1; required for formation of mRNA surveillance complexes. In terms of tissue distribution, ubiquitous.

The protein resides in the cytoplasm. The protein localises to the P-body. It is found in the nucleus. It localises to the perinuclear region. The enzyme catalyses ATP + H2O = ADP + phosphate + H(+). Functionally, RNA-dependent helicase required for nonsense-mediated decay (NMD) of aberrant mRNAs containing premature stop codons and modulates the expression level of normal mRNAs. Is recruited to mRNAs upon translation termination and undergoes a cycle of phosphorylation and dephosphorylation; its phosphorylation appears to be a key step in NMD. Recruited by release factors to stalled ribosomes together with the SMG1C protein kinase complex to form the transient SURF (SMG1-UPF1-eRF1-eRF3) complex. In EJC-dependent NMD, the SURF complex associates with the exon junction complex (EJC) (located 50-55 or more nucleotides downstream from the termination codon) through UPF2 and allows the formation of an UPF1-UPF2-UPF3 surveillance complex which is believed to activate NMD. Phosphorylated UPF1 is recognized by EST1B/SMG5, SMG6 and SMG7 which are thought to provide a link to the mRNA degradation machinery involving exonucleolytic and endonucleolytic pathways, and to serve as adapters to protein phosphatase 2A (PP2A), thereby triggering UPF1 dephosphorylation and allowing the recycling of NMD factors. UPF1 can also activate NMD without UPF2 or UPF3, and in the absence of the NMD-enhancing downstream EJC indicative for alternative NMD pathways. Plays a role in replication-dependent histone mRNA degradation at the end of phase S; the function is independent of UPF2. For the recognition of premature termination codons (PTC) and initiation of NMD a competitive interaction between UPF1 and PABPC1 with the ribosome-bound release factors is proposed. The ATPase activity of UPF1 is required for disassembly of mRNPs undergoing NMD. Together with UPF2 and dependent on TDRD6, mediates the degradation of mRNA harboring long 3'UTR by inducing the NMD machinery. Also capable of unwinding double-stranded DNA and translocating on single-stranded DNA. The sequence is that of Regulator of nonsense transcripts 1 from Homo sapiens (Human).